The sequence spans 122 residues: Large ribosomal subunit protein uL14c (122 aa).

Belongs to the universal ribosomal protein uL14 family. Part of the 50S ribosomal subunit.

It is found in the plastid. Its subcellular location is the chloroplast. In terms of biological role, binds to 23S rRNA. This chain is Large ribosomal subunit protein uL14c, found in Chlamydomonas reinhardtii (Chlamydomonas smithii).